Here is a 446-residue protein sequence, read N- to C-terminus: Golgi reassembly-stacking protein 1 (446 aa).

The interval 1-20 (MGLGASSEQPAGGEGFHLHG) is disordered. Gly-2 is lipidated: N-myristoyl glycine. PDZ GRASP-type domains lie at 14 to 104 (EGFH…FCSF) and 110 to 198 (HVWH…YGYL). Residues 14–214 (EGFHLHGVQE…PSSQHKKPPG (201 aa)) are GRASP. 3 residues coordinate Zn(2+): His-17, His-19, and Cys-102. Positions 189 to 201 (LGCGIGYGYLHRI) are essential for interaction with GOLGA2/GM130. Disordered regions lie at residues 202–252 (PTQP…LGSR) and 343–446 (VSGP…EPGL). Thr-216, Thr-220, and Thr-224 each carry phosphothreonine. The span at 343–354 (VSGPEDIGSSSS) shows a compositional bias: low complexity. Phosphoserine occurs at positions 365, 367, and 376.

It belongs to the GORASP family. In terms of assembly, homodimer. Forms higher-order oligomers under interphase but not mitotic conditions. Dimers of the protein on one membrane might be able to interact with dimers on another and so stack cisternae. Interacts with the C-terminus of GOLGA2/GM130 under both mitotic and non-mitotic conditions. The interaction is critical for the correct targeting of both proteins to the cis-Golgi. Interacts with TMED2 and TMED3. Post-translationally, phosphorylated by CDC2/B1 and PLK kinases during mitosis. Phosphorylation cycle correlates with the cisternal stacking cycle. Phosphorylation of the homodimer prevents the association of dimers into higher-order oligomers, leading to cisternal unstacking. In terms of processing, target for caspase-3 cleavage during apoptosis. The cleavage contributes to Golgi fragmentation and occurs very early in the execution phase of apoptosis. Myristoylated.

The protein resides in the golgi apparatus. The protein localises to the cis-Golgi network membrane. Its function is as follows. Key structural protein of the Golgi apparatus. The membrane cisternae of the Golgi apparatus adhere to each other to form stacks, which are aligned side by side to form the Golgi ribbon. Acting in concert with GORASP2/GRASP55, is required for the formation and maintenance of the Golgi ribbon, and may be dispensable for the formation of stacks. However, other studies suggest that GORASP1 plays an important role in assembly and membrane stacking of the cisternae, and in the reassembly of Golgi stacks after breakdown during mitosis. Caspase-mediated cleavage of GORASP1 is required for fragmentation of the Golgi during apoptosis. Also mediates, via its interaction with GOLGA2/GM130, the docking of transport vesicles with the Golgi membranes. Mediates ER stress-induced unconventional (ER/Golgi-independent) trafficking of core-glycosylated CFTR to cell membrane. The sequence is that of Golgi reassembly-stacking protein 1 (Gorasp1) from Mus musculus (Mouse).